Here is a 313-residue protein sequence, read N- to C-terminus: Protein PHOSPHATE-INDUCED 1 (313 aa).

Positions 1–22 (MATSHFILKLFLVISFCNVCFA) are cleaved as a signal peptide. Asn-119 carries N-linked (GlcNAc...) asparagine glycosylation.

Belongs to the EXORDIUM family.

The protein localises to the secreted. Its subcellular location is the extracellular space. It localises to the apoplast. Its function is as follows. May be involved in the regulation of cell division. The protein is Protein PHOSPHATE-INDUCED 1 of Nicotiana tabacum (Common tobacco).